Here is a 293-residue protein sequence, read N- to C-terminus: Phosphatidylserine decarboxylase proenzyme (293 aa).

Catalysis depends on charge relay system; for autoendoproteolytic cleavage activity residues aspartate 88, histidine 144, and serine 247. Residue serine 247 is the Schiff-base intermediate with substrate; via pyruvic acid; for decarboxylase activity of the active site. Serine 247 carries the post-translational modification Pyruvic acid (Ser); by autocatalysis.

This sequence belongs to the phosphatidylserine decarboxylase family. PSD-B subfamily. Prokaryotic type I sub-subfamily. As to quaternary structure, heterodimer of a large membrane-associated beta subunit and a small pyruvoyl-containing alpha subunit. The cofactor is pyruvate. In terms of processing, is synthesized initially as an inactive proenzyme. Formation of the active enzyme involves a self-maturation process in which the active site pyruvoyl group is generated from an internal serine residue via an autocatalytic post-translational modification. Two non-identical subunits are generated from the proenzyme in this reaction, and the pyruvate is formed at the N-terminus of the alpha chain, which is derived from the carboxyl end of the proenzyme. The autoendoproteolytic cleavage occurs by a canonical serine protease mechanism, in which the side chain hydroxyl group of the serine supplies its oxygen atom to form the C-terminus of the beta chain, while the remainder of the serine residue undergoes an oxidative deamination to produce ammonia and the pyruvoyl prosthetic group on the alpha chain. During this reaction, the Ser that is part of the protease active site of the proenzyme becomes the pyruvoyl prosthetic group, which constitutes an essential element of the active site of the mature decarboxylase.

It is found in the cell membrane. It carries out the reaction a 1,2-diacyl-sn-glycero-3-phospho-L-serine + H(+) = a 1,2-diacyl-sn-glycero-3-phosphoethanolamine + CO2. It participates in phospholipid metabolism; phosphatidylethanolamine biosynthesis; phosphatidylethanolamine from CDP-diacylglycerol: step 2/2. Catalyzes the formation of phosphatidylethanolamine (PtdEtn) from phosphatidylserine (PtdSer). The protein is Phosphatidylserine decarboxylase proenzyme of Xylella fastidiosa (strain M23).